A 339-amino-acid chain; its full sequence is UDP-glucose 4-epimerase (339 aa).

NAD(+)-binding positions include 12–13 (FI), 32–37 (DNLCNS), 59–60 (DI), 81–85 (FAGLK), Asn-100, Ser-125, Tyr-150, Lys-154, and Phe-179. Residues Ser-125 and Tyr-150 each contribute to the substrate site. The Proton acceptor role is filled by Tyr-150. Substrate is bound by residues Asn-180, 200–201 (NL), 217–219 (AVF), Arg-232, and 293–296 (RAGD).

This sequence belongs to the NAD(P)-dependent epimerase/dehydratase family. As to quaternary structure, homodimer. Requires NAD(+) as cofactor.

It catalyses the reaction UDP-alpha-D-glucose = UDP-alpha-D-galactose. It functions in the pathway carbohydrate metabolism; galactose metabolism. Its function is as follows. Involved in the metabolism of galactose. Plays an essential role in the incorporation of galactose into meningococcal lipopolysaccharide surface molecules, which are important for pathogenesis. Catalyzes the conversion of UDP-galactose (UDP-Gal) to UDP-glucose (UDP-Glc) through a mechanism involving the transient reduction of NAD. This chain is UDP-glucose 4-epimerase (galE), found in Neisseria meningitidis serogroup B (strain ATCC BAA-335 / MC58).